The chain runs to 85 residues: ATP synthase subunit c (85 aa).

Transmembrane regions (helical) follow at residues 19–39 and 62–82; these read LGAA…IGKI and IIAA…CLLV.

It belongs to the ATPase C chain family. As to quaternary structure, F-type ATPases have 2 components, F(1) - the catalytic core - and F(0) - the membrane proton channel. F(1) has five subunits: alpha(3), beta(3), gamma(1), delta(1), epsilon(1). F(0) has three main subunits: a(1), b(2) and c(10-14). The alpha and beta chains form an alternating ring which encloses part of the gamma chain. F(1) is attached to F(0) by a central stalk formed by the gamma and epsilon chains, while a peripheral stalk is formed by the delta and b chains.

It is found in the cell inner membrane. In terms of biological role, f(1)F(0) ATP synthase produces ATP from ADP in the presence of a proton or sodium gradient. F-type ATPases consist of two structural domains, F(1) containing the extramembraneous catalytic core and F(0) containing the membrane proton channel, linked together by a central stalk and a peripheral stalk. During catalysis, ATP synthesis in the catalytic domain of F(1) is coupled via a rotary mechanism of the central stalk subunits to proton translocation. Key component of the F(0) channel; it plays a direct role in translocation across the membrane. A homomeric c-ring of between 10-14 subunits forms the central stalk rotor element with the F(1) delta and epsilon subunits. The chain is ATP synthase subunit c from Bacteroides fragilis (strain ATCC 25285 / DSM 2151 / CCUG 4856 / JCM 11019 / LMG 10263 / NCTC 9343 / Onslow / VPI 2553 / EN-2).